An 890-amino-acid chain; its full sequence is Protein FAM171A1 (890 aa).

The first 21 residues, 1–21 (MSRSATLLLCLLGCHVWKAVT), serve as a signal peptide directing secretion. The Extracellular segment spans residues 22-303 (KTLREPGAGA…VTQDITTYHT (282 aa)). N-linked (GlcNAc...) asparagine glycosylation is found at Asn159, Asn190, and Asn194. Residues 304-324 (VFLLAILGGMAFILLVLLCLL) form a helical membrane-spanning segment. At 325 to 890 (LYYCRRKCLK…ERPLMAFNIK (566 aa)) the chain is on the cytoplasmic side. Phosphoserine is present on residues Ser358, Ser360, Ser371, Ser422, Ser443, and Ser525. Disordered regions lie at residues 730 to 759 (AGRN…RGDA) and 818 to 890 (EGSS…FNIK). Basic and acidic residues predominate over residues 747-757 (NEPKSARKGRG). The span at 822 to 833 (RRSGGQLPSLQE) shows a compositional bias: polar residues. 2 positions are modified to phosphoserine: Ser849 and Ser855. Residues 858-869 (EEEEDDDDDDQG) show a composition bias toward acidic residues. A compositionally biased stretch (basic and acidic residues) spans 870-883 (EDKKSPWQKREERP).

It belongs to the FAM171 family. In terms of assembly, interacts with ADAM10, NSG1 and OAZ1. As to expression, expressed in heart, brain, liver, skeletal muscle, kidney and pancreas. In brain, expressed by glia, pyramidal neurons and astrocytes (at protein level). Highly expressed in placental trophoblasts.

It localises to the cell membrane. Its function is as follows. Involved in the regulation of the cytoskeletal dynamics, plays a role in actin stress fiber formation. The chain is Protein FAM171A1 from Homo sapiens (Human).